A 940-amino-acid chain; its full sequence is Valine--tRNA ligase (940 aa).

A 'HIGH' region motif is present at residues 47 to 57 (PNVTGVLHMGH). Positions 564–568 (KLSKS) match the 'KMSKS' region motif. K567 contributes to the ATP binding site. Residues 873–905 (EEHLLKEKGRLEKERVRLERAVENLERLLGDES) are a coiled coil.

This sequence belongs to the class-I aminoacyl-tRNA synthetase family. ValS type 1 subfamily. Monomer.

The protein resides in the cytoplasm. The enzyme catalyses tRNA(Val) + L-valine + ATP = L-valyl-tRNA(Val) + AMP + diphosphate. Functionally, catalyzes the attachment of valine to tRNA(Val). As ValRS can inadvertently accommodate and process structurally similar amino acids such as threonine, to avoid such errors, it has a 'posttransfer' editing activity that hydrolyzes mischarged Thr-tRNA(Val) in a tRNA-dependent manner. This chain is Valine--tRNA ligase, found in Chlamydia pneumoniae (Chlamydophila pneumoniae).